The sequence spans 244 residues: Transcriptional activator protein FnrA (244 aa).

Residues 159-232 (KTADERIATF…GKEVRILDSI (74 aa)) enclose the HTH crp-type domain. Positions 192 to 211 (RNEIGNYLGLAVETVSRVFT) form a DNA-binding region, H-T-H motif.

Functionally, transcriptional regulator of arginine deiminase. In Stutzerimonas stutzeri (Pseudomonas stutzeri), this protein is Transcriptional activator protein FnrA (fnrA).